A 483-amino-acid polypeptide reads, in one-letter code: S-adenosylhomocysteine hydrolase-like protein 1 (483 aa).

Positions 1 to 56 (MQEFTKFPTKTGRRSLSRSISQSSTDSYSSAASYTDSSDDEVSPREKQQTNSKGSS) are disordered. Residues 17–36 (SRSISQSSTDSYSSAASYTD) are compositionally biased toward low complexity. Residues 18 to 45 (RSISQSSTDSYSSAASYTDSSDDEVSPR) are PEST. At S21 the chain carries Phosphoserine; by PKD. 4 positions are modified to phosphoserine: S24, S27, S30, and S37. Positions 91-154 (QGEKPLAGAK…EAGVAVFAWK (64 aa)) are interaction with BCL2L10. The substrate site is built by T108, D182, E207, K237, and D241. An NAD binding region spans residues 234-401 (SVTKQKFDNL…EGRLLNLSCS (168 aa)). NAD(+) is bound by residues 271 to 275 (GYGEV), E294, and N329. The residue at position 344 (S344) is a Phosphoserine. NAD(+) is bound at residue 350 to 352 (MGH). The PDZ-binding stretch occupies residues 473-483 (NGPFKPNYYRY).

It belongs to the adenosylhomocysteinase family. Forms multimers. Forms heteromultimers with AHCYL2 (via the C-terminal region). Interacts (when phosphorylated) with ITPR1 (when not phosphorylated); the interaction suppresses inositol 1,4,5-trisphosphate binding to ITPR1. Interacts with BCL2L10; this strengthens the interaction of AHCYL1 with ITPR1. Interacts with CFTR and SLC26A6; the interactions take place once AHCYL1 is released from ITPR1 and increase CFTR and SLC26A6 activities. Interacts with RRM1; in a phosphorylation- and (dATP)-dependent manner. Interacts (via PEST domain when phosphorylated) with SLC4A4 isoform 1 but not isoform 2; the interaction increases SLC4A4 isoform 1 activity. Interacts (when phosphorylated) with SLC9A3; the interaction is required for SLC9A3 apical location and activity. Interacts (when phosphorylated) with FIP1L1; the interaction is direct and associates AHCYL1 with the CPSF complex and RNA. Interacts with PAPOLA. Interacts with ZCCHC4. Interacts with AHCY. NAD(+) is required as a cofactor. Post-translationally, phosphorylated at Ser/Thr residues between Ser-21 and Thr-25 in the PEST region: required for interaction with dATP-bound RRM1 and ITPR1. Phosphorylation at Ser-21 by PRKD1 and CAMK4 is required for further phosphorylations by CSNK1A1. Phosphorylation is induced by oxidative stress. Probably phosphorylated by CAMK2A; phosphorylation at Ser-21 may be required for interaction with SLC9A3. Dephosphorylated in response to apoptotic stress conditions which causes translocation of both AHCYL1 and BCL2L10 from mitochondria-associated endoplasmic reticulum membranes and promotes apoptosis. In terms of tissue distribution, expressed in kidney proximal tubules and outer medulla (at protein level).

It localises to the endoplasmic reticulum. It is found in the cytoplasm. The protein localises to the cytosol. Its subcellular location is the apical cell membrane. The protein resides in the microsome. Functionally, multifaceted cellular regulator which coordinates several essential cellular functions including regulation of epithelial HCO3(-) and fluid secretion, mRNA processing and DNA replication. Regulates ITPR1 sensitivity to inositol 1,4,5-trisphosphate, competing for the common binding site and acting as endogenous 'pseudoligand' whose inhibitory activity can be modulated by its phosphorylation status. Promotes the formation of contact points between the endoplasmic reticulum (ER) and mitochondria, facilitating transfer of Ca(2+) from the ER to mitochondria. Under normal cellular conditions, functions cooperatively with BCL2L10 to limit ITPR1-mediated Ca(2+) release but, under apoptotic stress conditions, dephosphorylated which promotes dissociation of both AHCYL1 and BCL2L10 from mitochondria-associated endoplasmic reticulum membranes, inhibits BCL2L10 interaction with ITPR1 and leads to increased Ca(2+) transfer to mitochondria which promotes apoptosis. In the pancreatic and salivary ducts, at resting state, attenuates inositol 1,4,5-trisphosphate-induced calcium release by interacting with ITPR1. When extracellular stimuli induce ITPR1 phosphorylation or inositol 1,4,5-trisphosphate production, dissociates from ITPR1 to interact with CFTR and SLC26A6, mediating their synergistic activation by calcium and cAMP that stimulates the epithelial secretion of electrolytes and fluid. Also activates basolateral SLC4A4 isoform 1 to coordinate fluid and HCO3(-) secretion. Inhibits the effect of STK39 on SLC4A4 and CFTR by recruiting PP1 phosphatase which activates SLC4A4, SLC26A6 and CFTR through dephosphorylation. Mediates the induction of SLC9A3 surface expression produced by Angiotensin-2. Depending on the cell type, activates SLC9A3 in response to calcium or reverses SLC9A3R2-dependent calcium inhibition. May modulate the polyadenylation state of specific mRNAs, both by controlling the subcellular location of FIP1L1 and by inhibiting PAPOLA activity, in response to a stimulus that alters its phosphorylation state. Acts as a (dATP)-dependent inhibitor of ribonucleotide reductase large subunit RRM1, controlling the endogenous dNTP pool and ensuring normal cell cycle progression. In vitro does not exhibit any S-adenosyl-L-homocysteine hydrolase activity. This Rattus norvegicus (Rat) protein is S-adenosylhomocysteine hydrolase-like protein 1.